Reading from the N-terminus, the 338-residue chain is Lipoate-protein ligase A (338 aa).

One can recognise a BPL/LPL catalytic domain in the interval 29-216 (PATQRVLFLW…AFFAHYGERV (188 aa)). Residues Arg71, 76-79 (GAVF), and Lys134 contribute to the ATP site. A (R)-lipoate-binding site is contributed by Lys134.

The protein belongs to the LplA family. In terms of assembly, monomer.

It is found in the cytoplasm. It catalyses the reaction L-lysyl-[lipoyl-carrier protein] + (R)-lipoate + ATP = N(6)-[(R)-lipoyl]-L-lysyl-[lipoyl-carrier protein] + AMP + diphosphate + H(+). The protein operates within protein modification; protein lipoylation via exogenous pathway; protein N(6)-(lipoyl)lysine from lipoate: step 1/2. It functions in the pathway protein modification; protein lipoylation via exogenous pathway; protein N(6)-(lipoyl)lysine from lipoate: step 2/2. Catalyzes both the ATP-dependent activation of exogenously supplied lipoate to lipoyl-AMP and the transfer of the activated lipoyl onto the lipoyl domains of lipoate-dependent enzymes. The chain is Lipoate-protein ligase A from Escherichia coli (strain SMS-3-5 / SECEC).